The following is a 197-amino-acid chain: Protein GrpE (197 aa).

A compositionally biased stretch (basic and acidic residues) spans 1–27 (MSNKEQHIEKEEQLQEEKHEEQQKTEE). The tract at residues 1 to 34 (MSNKEQHIEKEEQLQEEKHEEQQKTEETEVEAVN) is disordered.

The protein belongs to the GrpE family. As to quaternary structure, homodimer.

The protein localises to the cytoplasm. In terms of biological role, participates actively in the response to hyperosmotic and heat shock by preventing the aggregation of stress-denatured proteins, in association with DnaK and GrpE. It is the nucleotide exchange factor for DnaK and may function as a thermosensor. Unfolded proteins bind initially to DnaJ; upon interaction with the DnaJ-bound protein, DnaK hydrolyzes its bound ATP, resulting in the formation of a stable complex. GrpE releases ADP from DnaK; ATP binding to DnaK triggers the release of the substrate protein, thus completing the reaction cycle. Several rounds of ATP-dependent interactions between DnaJ, DnaK and GrpE are required for fully efficient folding. This is Protein GrpE from Pasteurella multocida (strain Pm70).